Reading from the N-terminus, the 266-residue chain is Luciferase (266 aa).

A helical membrane pass occupies residues 22-41; that stretch reads GLAVTCCAVAVASIIAFPYI.

It belongs to the fungal luciferase family.

The protein localises to the membrane. It carries out the reaction 3-hydroxyhispidin + O2 = (E)-caffeoylpyruvate + hnu + CO2. The catalysed reaction is 3-hydroxyhispidin + O2 = 4-[(E)-2-(3,4-dihydroxyphenyl)ethenyl]-1,7-dihydroxy-2,3,5-trioxabicyclo[2.2.2]oct-7-en-6-one. Functionally, luciferase; part of the gene cluster that mediates the fungal bioluminescence cycle. Uses the fungal luciferin 3-hydroxyhispidin as a substrate to produce an endoperoxide as a high-energy intermediate with decomposition that yields oxyluciferin (also known as caffeoylpyruvate) and light emission. The fungal bioluminescence cycle begins with the hispidin synthetase that catalyzes the formation of hispidin which is further hydroxylated by the hispidin-3-hydroxylase, yielding the fungal luciferin 3-hydroxyhispidin. The luciferase then produces an endoperoxide as a high-energy intermediate with decomposition that yields oxyluciferin and light emission. Oxyluciferin can be recycled to caffeic acid by caffeoylpyruvate hydrolase. The protein is Luciferase of Armillaria mellea (Honey mushroom).